We begin with the raw amino-acid sequence, 309 residues long: Methionyl-tRNA formyltransferase (309 aa).

112-115 (SLLP) is a (6S)-5,6,7,8-tetrahydrofolate binding site.

It belongs to the Fmt family.

The catalysed reaction is L-methionyl-tRNA(fMet) + (6R)-10-formyltetrahydrofolate = N-formyl-L-methionyl-tRNA(fMet) + (6S)-5,6,7,8-tetrahydrofolate + H(+). Its function is as follows. Attaches a formyl group to the free amino group of methionyl-tRNA(fMet). The formyl group appears to play a dual role in the initiator identity of N-formylmethionyl-tRNA by promoting its recognition by IF2 and preventing the misappropriation of this tRNA by the elongation apparatus. The protein is Methionyl-tRNA formyltransferase of Bartonella tribocorum (strain CIP 105476 / IBS 506).